A 414-amino-acid chain; its full sequence is Putative dipeptidase TRV_05564 (414 aa).

The N-terminal stretch at 1–20 is a signal peptide; that stretch reads MAALFVSLLALTSLVPVQGA. 3 residues coordinate Zn(2+): H45, D47, and E157. Cysteines 96 and 186 form a disulfide. Residue H184 coordinates substrate. Zn(2+) is bound by residues H228 and H249. R260 and D320 together coordinate substrate. Residue N392 is glycosylated (N-linked (GlcNAc...) asparagine).

This sequence belongs to the metallo-dependent hydrolases superfamily. Peptidase M19 family. Zn(2+) serves as cofactor.

It carries out the reaction an L-aminoacyl-L-amino acid + H2O = 2 an L-alpha-amino acid. Its function is as follows. Hydrolyzes a wide range of dipeptides. This chain is Putative dipeptidase TRV_05564, found in Trichophyton verrucosum (strain HKI 0517).